Consider the following 379-residue polypeptide: Queuine tRNA-ribosyltransferase (379 aa).

Aspartate 94 functions as the Proton acceptor in the catalytic mechanism. Substrate is bound by residues 94 to 98 (DSGGF), aspartate 148, glutamine 191, and glycine 218. The interval 249–255 (GVGSPDS) is RNA binding. Catalysis depends on aspartate 268, which acts as the Nucleophile. The interval 273–277 (TRIAR) is RNA binding; important for wobble base 34 recognition. The Zn(2+) site is built by cysteine 306, cysteine 308, cysteine 311, and histidine 337.

It belongs to the queuine tRNA-ribosyltransferase family. In terms of assembly, homodimer. Within each dimer, one monomer is responsible for RNA recognition and catalysis, while the other monomer binds to the replacement base PreQ1. Zn(2+) serves as cofactor.

It carries out the reaction 7-aminomethyl-7-carbaguanine + guanosine(34) in tRNA = 7-aminomethyl-7-carbaguanosine(34) in tRNA + guanine. Its pathway is tRNA modification; tRNA-queuosine biosynthesis. Functionally, catalyzes the base-exchange of a guanine (G) residue with the queuine precursor 7-aminomethyl-7-deazaguanine (PreQ1) at position 34 (anticodon wobble position) in tRNAs with GU(N) anticodons (tRNA-Asp, -Asn, -His and -Tyr). Catalysis occurs through a double-displacement mechanism. The nucleophile active site attacks the C1' of nucleotide 34 to detach the guanine base from the RNA, forming a covalent enzyme-RNA intermediate. The proton acceptor active site deprotonates the incoming PreQ1, allowing a nucleophilic attack on the C1' of the ribose to form the product. After dissociation, two additional enzymatic reactions on the tRNA convert PreQ1 to queuine (Q), resulting in the hypermodified nucleoside queuosine (7-(((4,5-cis-dihydroxy-2-cyclopenten-1-yl)amino)methyl)-7-deazaguanosine). The protein is Queuine tRNA-ribosyltransferase of Bacillus mycoides (strain KBAB4) (Bacillus weihenstephanensis).